The following is a 166-amino-acid chain: MFPMVTEFMNYGQQTVRAARYIGQGFMITLSHANRLPVTIQYPYEKLITSERFRGRIHFEFDKCIACEVCVRVCPIDLPVVDWQLETDIRKKRLVNYSIDFGICIFCGNCVEYCPTNCLSMTEEYELSTYDRHELNYNQIALGRLPMSIIDDYTIRTILNLPERKT.

4Fe-4S ferredoxin-type domains follow at residues 55-84 (GRIHFEFDKCIACEVCVRVCPIDLPVVDWQ) and 95-124 (VNYSIDFGICIFCGNCVEYCPTNCLSMTEE). [4Fe-4S] cluster is bound by residues C64, C67, C70, C74, C104, C107, C110, and C114.

The protein belongs to the complex I 23 kDa subunit family. In terms of assembly, NDH is composed of at least 16 different subunits, 5 of which are encoded in the nucleus. [4Fe-4S] cluster serves as cofactor.

Its subcellular location is the plastid. The protein resides in the chloroplast thylakoid membrane. The enzyme catalyses a plastoquinone + NADH + (n+1) H(+)(in) = a plastoquinol + NAD(+) + n H(+)(out). It carries out the reaction a plastoquinone + NADPH + (n+1) H(+)(in) = a plastoquinol + NADP(+) + n H(+)(out). NDH shuttles electrons from NAD(P)H:plastoquinone, via FMN and iron-sulfur (Fe-S) centers, to quinones in the photosynthetic chain and possibly in a chloroplast respiratory chain. The immediate electron acceptor for the enzyme in this species is believed to be plastoquinone. Couples the redox reaction to proton translocation, and thus conserves the redox energy in a proton gradient. This chain is NAD(P)H-quinone oxidoreductase subunit I, chloroplastic, found in Coreopsis petrophiloides (Tickseed).